The sequence spans 228 residues: ATP phosphoribosyltransferase (228 aa).

The protein belongs to the ATP phosphoribosyltransferase family. Short subfamily. Heteromultimer composed of HisG and HisZ subunits.

It is found in the cytoplasm. The catalysed reaction is 1-(5-phospho-beta-D-ribosyl)-ATP + diphosphate = 5-phospho-alpha-D-ribose 1-diphosphate + ATP. Its pathway is amino-acid biosynthesis; L-histidine biosynthesis; L-histidine from 5-phospho-alpha-D-ribose 1-diphosphate: step 1/9. Functionally, catalyzes the condensation of ATP and 5-phosphoribose 1-diphosphate to form N'-(5'-phosphoribosyl)-ATP (PR-ATP). Has a crucial role in the pathway because the rate of histidine biosynthesis seems to be controlled primarily by regulation of HisG enzymatic activity. The protein is ATP phosphoribosyltransferase of Moorella thermoacetica (strain ATCC 39073 / JCM 9320).